Reading from the N-terminus, the 300-residue chain is uncharacterized protein (300 aa).

Transmembrane regions (helical) follow at residues 13–35, 45–67, 80–102, 106–128, 180–202, 217–236, 243–265, and 275–294; these read LLCI…LQPL, MLTM…SLLS, WVLF…WAPL, GINI…WAWL, IPAL…IYIL, YWLL…SANL, PVSI…AVFV, and YFTY…EGLL.

Belongs to the EamA transporter family.

It localises to the cell membrane. This is an uncharacterized protein from Haemophilus influenzae (strain ATCC 51907 / DSM 11121 / KW20 / Rd).